The chain runs to 800 residues: Putative antiporter subunit mnhA2 (800 aa).

A run of 20 helical transmembrane segments spans residues M1–S21, I33–A53, G78–A98, L118–F138, F167–M187, G207–F227, T241–L261, Y273–L293, G300–G320, I331–I351, L387–S407, F424–F444, P472–V492, G527–I547, I595–L615, G627–I647, L651–M671, L676–S696, I712–T732, and L768–L788.

It belongs to the CPA3 antiporters (TC 2.A.63) subunit A family. May form a heterooligomeric complex that consists of seven subunits: mnhA2, mnhB2, mnhC2, mnhD2, mnhE2, mnhF2 and mnhG2.

It is found in the cell membrane. This is Putative antiporter subunit mnhA2 (mnhA2) from Staphylococcus aureus (strain MSSA476).